The sequence spans 539 residues: 4-coumarate--CoA ligase 5 (539 aa).

Residues serine 185, serine 186, glycine 187, threonine 188, threonine 189, and lysine 193 each contribute to the ATP site. Residues tyrosine 235 and serine 239 each coordinate (E)-4-coumaroyl-AMP. Arginine 256 is a binding site for CoA. Positions aspartate 258–glutamine 327 are SBD1. (E)-4-coumaroyl-AMP contacts are provided by alanine 305, glutamine 327, glycine 328, threonine 332, and methionine 340. Glutamine 327, glycine 328, and threonine 332 together coordinate ATP. The tract at residues glycine 328–tyrosine 395 is SBD2. Positions 416 and 431 each coordinate ATP. (E)-4-coumaroyl-AMP is bound by residues lysine 433 and lysine 437. CoA is bound by residues lysine 439 and glycine 440. Lysine 522 lines the ATP pocket.

It belongs to the ATP-dependent AMP-binding enzyme family. Requires Mg(2+) as cofactor. Expressed in roots, stems, leaf blades, leaf sheaths and spikelets.

The enzyme catalyses (E)-ferulate + ATP + CoA = (E)-feruloyl-CoA + AMP + diphosphate. The catalysed reaction is (E)-4-coumarate + ATP + CoA = (E)-4-coumaroyl-CoA + AMP + diphosphate. It catalyses the reaction (E)-sinapate + ATP + CoA = (E)-sinapoyl-CoA + AMP + diphosphate. It carries out the reaction (E)-caffeate + ATP + CoA = (E)-caffeoyl-CoA + AMP + diphosphate. The enzyme catalyses (E)-cinnamate + ATP + CoA = (E)-cinnamoyl-CoA + AMP + diphosphate. The catalysed reaction is (E)-ferulate + ATP + H(+) = (E)-feruloyl-AMP + diphosphate. It catalyses the reaction (E)-feruloyl-AMP + CoA = (E)-feruloyl-CoA + AMP + H(+). It carries out the reaction (E)-4-coumarate + ATP + H(+) = (E)-4-coumaroyl-AMP + diphosphate. The enzyme catalyses (E)-4-coumaroyl-AMP + CoA = (E)-4-coumaroyl-CoA + AMP + H(+). The catalysed reaction is (E)-sinapate + ATP + H(+) = (E)-sinapoyl-AMP + diphosphate. It catalyses the reaction (E)-sinapoyl-AMP + CoA = (E)-sinapoyl-CoA + AMP + H(+). It carries out the reaction (E)-caffeate + ATP + H(+) = (E)-caffeoyl-AMP + diphosphate. The enzyme catalyses (E)-caffeoyl-AMP + CoA = (E)-caffeoyl-CoA + AMP + H(+). The protein operates within phytoalexin biosynthesis; 3,4',5-trihydroxystilbene biosynthesis; 3,4',5-trihydroxystilbene from trans-4-coumarate: step 1/2. In terms of biological role, involved in the phenylpropanoid metabolism by mediating the activation of a number of hydroxycinnamates for the biosynthesis of monolignols and other phenolic secondary metabolites. Catalyzes the formation of CoA esters of cinnamate, 4-coumarate, caffeate and ferulate. Is also able to convert sinapate to its corresponding CoA ester, a reaction that is rarely observed in 4CL catalysis. Is more efficient with substrates in the following order: ferulate &gt; 4-coumarate &gt; sinapate &gt; caffeate &gt; cinnamate. Follows a two-step reaction mechanism, wherein the carboxylate substrate first undergoes adenylation by ATP, followed by a thioesterification in the presence of CoA to yield the final CoA thioesters. The protein is 4-coumarate--CoA ligase 5 of Oryza sativa subsp. japonica (Rice).